The chain runs to 308 residues: Aspartate carbamoyltransferase catalytic subunit (308 aa).

Arg-55 and Thr-56 together coordinate carbamoyl phosphate. Residue Lys-83 coordinates L-aspartate. Arg-105, His-133, and Gln-136 together coordinate carbamoyl phosphate. 2 residues coordinate L-aspartate: Arg-166 and Arg-223. Residues Gly-264 and Pro-265 each contribute to the carbamoyl phosphate site.

The protein belongs to the aspartate/ornithine carbamoyltransferase superfamily. ATCase family. As to quaternary structure, heterododecamer (2C3:3R2) of six catalytic PyrB chains organized as two trimers (C3), and six regulatory PyrI chains organized as three dimers (R2).

The catalysed reaction is carbamoyl phosphate + L-aspartate = N-carbamoyl-L-aspartate + phosphate + H(+). It participates in pyrimidine metabolism; UMP biosynthesis via de novo pathway; (S)-dihydroorotate from bicarbonate: step 2/3. Catalyzes the condensation of carbamoyl phosphate and aspartate to form carbamoyl aspartate and inorganic phosphate, the committed step in the de novo pyrimidine nucleotide biosynthesis pathway. This is Aspartate carbamoyltransferase catalytic subunit from Salinispora arenicola (strain CNS-205).